A 273-amino-acid polypeptide reads, in one-letter code: Thiazole synthase (273 aa).

Lys110 (schiff-base intermediate with DXP) is an active-site residue. 1-deoxy-D-xylulose 5-phosphate contacts are provided by residues Gly171, 197-198, and 219-220; these read AG and NT. Residues 251–273 are disordered; that stretch reads MAAQDSAQPSTPVLGTPFWHHAP.

It belongs to the ThiG family. In terms of assembly, homotetramer. Forms heterodimers with either ThiH or ThiS.

The protein localises to the cytoplasm. It catalyses the reaction [ThiS sulfur-carrier protein]-C-terminal-Gly-aminoethanethioate + 2-iminoacetate + 1-deoxy-D-xylulose 5-phosphate = [ThiS sulfur-carrier protein]-C-terminal Gly-Gly + 2-[(2R,5Z)-2-carboxy-4-methylthiazol-5(2H)-ylidene]ethyl phosphate + 2 H2O + H(+). Its pathway is cofactor biosynthesis; thiamine diphosphate biosynthesis. Its function is as follows. Catalyzes the rearrangement of 1-deoxy-D-xylulose 5-phosphate (DXP) to produce the thiazole phosphate moiety of thiamine. Sulfur is provided by the thiocarboxylate moiety of the carrier protein ThiS. In vitro, sulfur can be provided by H(2)S. The polypeptide is Thiazole synthase (Variovorax paradoxus (strain S110)).